The primary structure comprises 304 residues: Ornithine carbamoyltransferase (304 aa).

Carbamoyl phosphate contacts are provided by residues 51–54 (STRT), Gln78, Arg102, and 129–132 (HPVQ). L-ornithine contacts are provided by residues Asn157, Asp221, and 225–226 (SM). Carbamoyl phosphate-binding positions include 261 to 262 (CL) and Arg289.

It belongs to the aspartate/ornithine carbamoyltransferase superfamily. OTCase family.

It is found in the cytoplasm. It catalyses the reaction carbamoyl phosphate + L-ornithine = L-citrulline + phosphate + H(+). The protein operates within amino-acid degradation; L-arginine degradation via ADI pathway; carbamoyl phosphate from L-arginine: step 2/2. Its function is as follows. Reversibly catalyzes the transfer of the carbamoyl group from carbamoyl phosphate (CP) to the N(epsilon) atom of ornithine (ORN) to produce L-citrulline. This chain is Ornithine carbamoyltransferase, found in Campylobacter curvus (strain 525.92).